A 548-amino-acid chain; its full sequence is MAAPTLTTDGPRLGQQEMKKMSPSFHPTLWGDFFLSYEAPTEAQEAEMRQRAEVLREEVRNMIKGSHDVPEIVDLIITLQRLNLDYHYEDEINEKLAVVYNSNYDGGNLDLVSRRFYLLRKCGYHVSSDVFLNFKDQYGNFIEVDTRSLLSLYNAAYLRIHGETVLDEAISFTTRCLQDRLEHLESPIAEEVSSALDTPLFRRVGTLEMKDYIPIYEKDAKQNKSILEFAKLNFNLLQLLYSSELKECTTWWKELRVESNLSFVRDRIVEVYFWMSGGCYDPQYSHSRIILTKIVAFITILDDTLDSHANSYESMQLAEAVERWDESAVSLLPEYMKDFYMYLLKTFSSFENELGPDKSYRVFYLKEAVKELVREYTKEIKWRDEDYVPKTLKEHLKVSLISIGGTLVLCSAFVGMGDVVTKKIMEWVMSDAELVKSFGIFVRLSNDIVSTKREQREKHCVSTVQCYMKQHELTMDEACEQIKELTEDSWKFMIEQGLALKEYPIIVPRTVLEFARTVDYMYKEADKYTVSHTIKDMLTSLYVKPVLM.

Residues D302 and D306 each contribute to the Mg(2+) site. Positions 302, 306, 443, and 446 each coordinate substrate. The DDXXD motif signature appears at 302 to 306 (DDTLD). Mg(2+)-binding residues include N446, S450, and E454.

This sequence belongs to the terpene synthase family. In terms of assembly, monomer. It depends on Mg(2+) as a cofactor. The cofactor is Mn(2+). In terms of tissue distribution, expressed in roots. Not detected in leaves, unless damaged by herbivory or infected by fungi.

The protein resides in the cytoplasm. The enzyme catalyses (S)-beta-bisabolene = (S)-beta-macrocarpene. It carries out the reaction (2E,6E)-farnesyl diphosphate = (S)-beta-bisabolene + diphosphate. The catalysed reaction is (2E)-geranyl diphosphate = (4S)-limonene + diphosphate. It catalyses the reaction (2E)-geranyl diphosphate = beta-myrcene + diphosphate. The enzyme catalyses (2E)-geranyl diphosphate = terpinolene + diphosphate. It carries out the reaction (2E)-geranyl diphosphate + H2O = (S)-linalool + diphosphate. It functions in the pathway secondary metabolite biosynthesis; terpenoid biosynthesis. Involved in the biosynthesis of the bicyclic sesquiterpene (S)-beta-macrocarpene. Can use both geranyl diphosphate and farnesyl diphosphate as substrate, but not geranylgeranyl diphosphate. Produces mainly (S)-beta-macrocarpene, but also smaller amounts of beta-bisabolene and (E)-beta-farnesene when used with farnesyl diphosphate as substrate. In the presence of geranyl diphosphate, produces the acyclic monoterpenes beta-myrcene and linalool along with minor amounts of the cyclic compounds limonene, alpha-thujene, sabinene and alpha-terpinolene. May be involved in plant defense. This Zea mays (Maize) protein is (S)-beta-macrocarpene synthase.